The chain runs to 468 residues: Ubiquinone biosynthesis monooxygenase COQ6, mitochondrial (468 aa).

A mitochondrion-targeting transit peptide spans 1–28 (MAARLVSRCGAVRAAPHSGPLVSWRRWS).

The protein belongs to the UbiH/COQ6 family. As to quaternary structure, component of a multi-subunit COQ enzyme complex, composed of at least COQ3, COQ4, COQ5, COQ6, COQ7 and COQ9. Interacts with COQ8B and COQ7. It depends on FAD as a cofactor. As to expression, widely expressed.

The protein resides in the mitochondrion inner membrane. It localises to the golgi apparatus. It is found in the cell projection. The enzyme catalyses 4-hydroxy-3-(all-trans-decaprenyl)benzoate + 2 reduced [2Fe-2S]-[ferredoxin] + O2 + 2 H(+) = 3,4-dihydroxy-5-(all-trans-decaprenyl)benzoate + 2 oxidized [2Fe-2S]-[ferredoxin] + H2O. It carries out the reaction 2-methoxy-6-(all-trans-decaprenyl)phenol + 2 reduced [2Fe-2S]-[ferredoxin] + O2 + 2 H(+) = 2-methoxy-6-(all-trans-decaprenyl)benzene-1,4-diol + 2 oxidized [2Fe-2S]-[ferredoxin] + H2O. It functions in the pathway cofactor biosynthesis; ubiquinone biosynthesis. FAD-dependent monooxygenase required for two non-consecutive steps during ubiquinone biosynthesis. Required for the C5-ring hydroxylation during ubiquinone biosynthesis by catalyzing the hydroxylation of 4-hydroxy-3-(all-trans-decaprenyl)benzoic acid to 3,4-dihydroxy-5-(all-trans-decaprenyl)benzoic acid. Also acts downstream of COQ4, for the C1-hydroxylation during ubiquinone biosynthesis by catalyzing the hydroxylation of 2-methoxy-6-(all-trans-decaprenyl)phenol to 2-methoxy-6-(all-trans-decaprenyl)benzene-1,4-diol. The electrons required for the hydroxylation reaction are funneled indirectly to COQ6 from NADPH via a ferredoxin/ferredoxin reductase system composed of FDX2 and FDXR. This chain is Ubiquinone biosynthesis monooxygenase COQ6, mitochondrial, found in Homo sapiens (Human).